The chain runs to 406 residues: Succinylornithine transaminase (406 aa).

N6-(pyridoxal phosphate)lysine is present on Lys-252.

It belongs to the class-III pyridoxal-phosphate-dependent aminotransferase family. AstC subfamily. The cofactor is pyridoxal 5'-phosphate.

It carries out the reaction N(2)-succinyl-L-ornithine + 2-oxoglutarate = N-succinyl-L-glutamate 5-semialdehyde + L-glutamate. It functions in the pathway amino-acid degradation; L-arginine degradation via AST pathway; L-glutamate and succinate from L-arginine: step 3/5. Functionally, catalyzes the transamination of N(2)-succinylornithine and alpha-ketoglutarate into N(2)-succinylglutamate semialdehyde and glutamate. Can also act as an acetylornithine aminotransferase. This chain is Succinylornithine transaminase, found in Escherichia coli O157:H7.